A 105-amino-acid chain; its full sequence is MAGRTITRADLCEAVYQQVGLSRTESAALVEMVLREIADCLAKGETVKLSSFGSFVVRDKGQRVGRNPKTGEEVPIEPRRVMVFKPSSILKNRINGRTGKAAGRE.

Belongs to the bacterial histone-like protein family. In terms of assembly, heterodimer of an alpha and a beta chain.

Its function is as follows. This protein is one of the two subunits of integration host factor, a specific DNA-binding protein that functions in genetic recombination as well as in transcriptional and translational control. The polypeptide is Integration host factor subunit alpha (Azorhizobium caulinodans (strain ATCC 43989 / DSM 5975 / JCM 20966 / LMG 6465 / NBRC 14845 / NCIMB 13405 / ORS 571)).